The sequence spans 464 residues: Nuclear distribution protein nudF 2 (464 aa).

Residues 9 to 41 (QAAELNKSIIAYLSAHGLAETLAAFRKESDFPD) enclose the LisH domain. The stretch at 63–88 (NSTLMKKLLALESHNKALRNELNSTR) forms a coiled coil. 8 WD repeats span residues 112–151 (SHRD…LERT), 154–195 (GHTM…KNVK), 199–238 (GHDH…RVKT), 241–280 (DHTG…PICK), 285–343 (GHEN…MTLT), 344–383 (GHAS…RCVK), 388–424 (AHDG…AELP), and 426–464 (SKLD…RSHK).

The protein belongs to the WD repeat LIS1/nudF family. In terms of assembly, self-associates. Interacts with nudE and dynein.

It is found in the cytoplasm. It localises to the cytoskeleton. The protein localises to the spindle pole. In terms of biological role, positively regulates the activity of the minus-end directed microtubule motor protein dynein. May enhance dynein-mediated microtubule sliding by targeting dynein to the microtubule plus end. Required for nuclear migration during vegetative growth as well as development. Required for retrograde early endosome (EE) transport from the hyphal tip. Required for localization of dynein to the mitotic spindle poles. Recruits additional proteins to the dynein complex at SPBs. This Penicillium rubens (strain ATCC 28089 / DSM 1075 / NRRL 1951 / Wisconsin 54-1255) (Penicillium chrysogenum) protein is Nuclear distribution protein nudF 2.